Consider the following 1114-residue polypeptide: Lysylphosphatidylglycerol biosynthesis bifunctional protein LysX (1114 aa).

Positions 1–11 (MSASTETHHAS) are enriched in basic and acidic residues. A disordered region spans residues 1-26 (MSASTETHHASEAAVPTAPRPRPGLG). A phosphatidylglycerol lysyltransferase region spans residues 1 to 618 (MSASTETHHA…GLHSDGSAPG (618 aa)). 6 helical membrane passes run 38–58 (IAGL…ISPV), 77–97 (APDT…ALAS), 101–121 (IAWW…VIVS), 126–146 (NVNA…LIAA), 164–184 (GVLI…VELF), and 219–239 (FVNT…VITL). Residues 619–1114 (EGLAPTATGP…LAFPLAKPRQ (496 aa)) form a lysine--tRNA ligase region. The OB DNA-binding region spans 674-751 (VRIAGRLLRI…LSLLANEWRM (78 aa)). 2 residues coordinate Mg(2+): Asp-1025 and Glu-1032.

It in the N-terminal section; belongs to the LPG synthetase family. The protein in the C-terminal section; belongs to the class-II aminoacyl-tRNA synthetase family. Mg(2+) serves as cofactor.

It is found in the cell membrane. The catalysed reaction is tRNA(Lys) + L-lysine + ATP = L-lysyl-tRNA(Lys) + AMP + diphosphate. It carries out the reaction L-lysyl-tRNA(Lys) + a 1,2-diacyl-sn-glycero-3-phospho-(1'-sn-glycerol) = a 1,2-diacyl-sn-glycero-3-phospho-1'-(3'-O-L-lysyl)-sn-glycerol + tRNA(Lys). Catalyzes the production of L-lysyl-tRNA(Lys)transfer and the transfer of a lysyl group from L-lysyl-tRNA(Lys) to membrane-bound phosphatidylglycerol (PG), which produces lysylphosphatidylglycerol (LPG), one of the components of the bacterial membrane with a positive net charge. LPG synthesis contributes to the resistance to cationic antimicrobial peptides (CAMPs) and likely protects M.tuberculosis against the CAMPs produced by competiting microorganisms (bacteriocins). In fact, the modification of anionic phosphatidylglycerol with positively charged L-lysine results in repulsion of the peptides. The sequence is that of Lysylphosphatidylglycerol biosynthesis bifunctional protein LysX (lysX) from Rhodococcus jostii (strain RHA1).